Here is a 152-residue protein sequence, read N- to C-terminus: Putative aryl-alcohol dehydrogenase YFL057C (152 aa).

It belongs to the aldo/keto reductase family. Aldo/keto reductase 2 subfamily.

Putative aryl-alcohol dehydrogenase. The chain is Putative aryl-alcohol dehydrogenase YFL057C from Saccharomyces cerevisiae (strain ATCC 204508 / S288c) (Baker's yeast).